A 498-amino-acid chain; its full sequence is Minor fimbrium subunit Mfa1 (498 aa).

Residues 1 to 19 (MKLNKMFLVGALLSLGFAS) form the signal peptide. A lipid anchor (N-palmitoyl cysteine) is attached at Cys20. Cys20 is lipidated: S-diacylglycerol cysteine. Positions 20–50 (CSKEGNGPAPDSSSTADTHMSVSMSLPQHNR) are excised as a propeptide. The disordered stretch occupies residues 436–476 (SGNPFVPTDPDPNNPDTPDNPDTPDPEDPDTPNPEEPLPVQ).

This sequence belongs to the bacteroidetes fimbrillin superfamily. FimA/Mfa1 family. In terms of assembly, structural component of the fimbrial stalk. Minor fimbriae are composed of a structural subunit, most often Mfa1, and the accessory subunits Mfa3, Mfa4 and Mfa5. Mfa1 interacts with Mfa2; this anchors the fimbrium in the membrane. Fimbrium assembly occurs by linear, head-to-tail oligomerization of fimbrial subunits. This is mediated via insertion of a C-terminal beta-strand from one subunit into a groove in the N-terminal domain of the following subunit.

It localises to the fimbrium. It is found in the cell outer membrane. Functionally, structural subunit of the minor fimbriae. These filamentous pili are attached to the cell surface; they mediate biofilm formation, adhesion onto host cells and onto other bacteria that are part of the oral microbiome. They play an important role in invasion of periodontal tissues and are recognized as major virulence factors. Mfa1 orthologs from different strains have highly divergent sequences, and this correlates with pathogenicity. The sequence is that of Minor fimbrium subunit Mfa1 from Porphyromonas gingivalis (Bacteroides gingivalis).